The primary structure comprises 463 residues: MEKPSREAFEGNNKLLIGIVLSVITFWLFAQSLVNVVPILEDSFNTDIGTVNIAVSITALFSGMFVVGAGGLADKYGRIKLTNIGIILNILGSLLIIISNIPLLLIIGRLIQGLSAACIMPATLSIIKSYYIGKDRQRALSYWSIGSWGGSGVCSFFGGAVATLLGWRWIFILSIIISLIALFLIKGTPETKSKSISLNKFDIKGLVLLVIMLLSLNILITKGSELGVTSLLFITLLAIAIGSFSLFIVLEKRATNPLIDFKLFKNKAYTGATASNFLLNGVAGTLIVANTFVQRGLGYSSLQAGSLSITYLVMVLIMIRVGEKLLQTLGCKKPMLIGTGVLIVGECLISLTFLPEIFYVICCIIGYLFFGLGLGIYATPSTDTAIANAPLEKVGVAAGIYKMASALGGAFGVALSGAVYAIVSNMTNIYTGAMIALWLNAGMGILSFVIILLLVPKQNDTQL.

14 consecutive transmembrane segments (helical) span residues 17 to 37, 53 to 73, 86 to 106, 107 to 127, 142 to 162, 165 to 185, 201 to 221, 230 to 250, 273 to 293, 299 to 319, 334 to 354, 357 to 377, 403 to 423, and 435 to 455; these read IGIV…VNVV, IAVS…GGLA, IILN…LLLI, IGRL…LSII, YWSI…GAVA, LGWR…LFLI, FDIK…ILIT, SLLF…FIVL, TASN…NTFV, YSSL…LIMI, PMLI…LTFL, IFYV…LGIY, MASA…YAIV, and IALW…LLLV.

It belongs to the major facilitator superfamily. TCR/Tet family.

It localises to the cell membrane. Multidrug efflux pump that acts independently of NorA and is one of the factors that confers resistance against diverse quinolones and chemical compounds. This Staphylococcus aureus (strain USA300) protein is Quinolone resistance protein NorB (norB).